The chain runs to 142 residues: HTH-type transcriptional regulator LysM (142 aa).

The 64-residue stretch at 6–69 (IDESDLKILE…ELENEIRAIV (64 aa)) folds into the HTH asnC-type domain. The H-T-H motif DNA-binding region spans 25 to 44 (YTLIAKELKVSEAAIRKRIE).

In terms of assembly, homotetramer.

It is found in the cytoplasm. Its pathway is amino-acid biosynthesis; L-lysine biosynthesis via AAA pathway [regulation]. In the absence or at low concentrations of lysine, activates the biosynthesis of this amino acid via the alpha-aminoadipate (AAA) pathway. The sequence is that of HTH-type transcriptional regulator LysM (lysM) from Saccharolobus solfataricus (strain ATCC 35092 / DSM 1617 / JCM 11322 / P2) (Sulfolobus solfataricus).